The following is a 493-amino-acid chain: Serine/threonine-protein kinase PBL34 (493 aa).

Disordered regions lie at residues 1–42 (MGLD…EEEE) and 84–117 (SKSA…TPVI). Gly2 carries the N-myristoyl glycine lipid modification. Over residues 12–37 (WKSEKPKETENKNHKKKNGDDNKSRN) the composition is skewed to basic and acidic residues. Residues 100-114 (SSTTTTSNAESSSST) are compositionally biased toward low complexity. Thr131 carries the post-translational modification Phosphothreonine. The Protein kinase domain maps to 142-428 (FRPESLLGEG…VEALKPLPHL (287 aa)). Residues 148-156 (LGEGGFGCV) and Lys180 each bind ATP. Tyr225 carries the phosphotyrosine modification. Residue Asp275 is the Proton acceptor of the active site. Ser279 is modified (phosphoserine). Residue Thr306 is modified to Phosphothreonine. Residue Ser309 is modified to Phosphoserine. Thr310 and Thr315 each carry phosphothreonine. Tyr323 is subject to Phosphotyrosine. The segment at 447 to 493 (KNGSGRSQGFGSRNGQHQPVFRTLSSPHGSSPYRHQIPSPKPKGATT) is disordered. Residues 450–475 (SGRSQGFGSRNGQHQPVFRTLSSPHG) are compositionally biased toward polar residues.

It belongs to the protein kinase superfamily. Ser/Thr protein kinase family. As to quaternary structure, interacts with the Xanthomonas campestris effector XopAC/AvrAC. Interacts with SD129. In terms of processing, phosphorylated by SD129 at Thr-306 and Thr-310 in response to the pathogen-associated molecular pattern (PAMP) 3-OH-C10:0, a medium-chain 3-hydroxy fatty acid.

Its subcellular location is the cell membrane. It carries out the reaction L-seryl-[protein] + ATP = O-phospho-L-seryl-[protein] + ADP + H(+). The catalysed reaction is L-threonyl-[protein] + ATP = O-phospho-L-threonyl-[protein] + ADP + H(+). Involved in chitin-triggered immune signaling and is required for reactive oxygen species (ROS) production. Acts downstream of SD129 in defense signaling triggered by the pathogen-associated molecular pattern (PAMP) 3-OH-C10:0, a medium-chain 3-hydroxy fatty acid. In Arabidopsis thaliana (Mouse-ear cress), this protein is Serine/threonine-protein kinase PBL34.